The sequence spans 63 residues: Large ribosomal subunit protein bL28c (63 aa).

Belongs to the bacterial ribosomal protein bL28 family.

The protein localises to the plastid. The protein resides in the chloroplast. This Porphyra purpurea (Red seaweed) protein is Large ribosomal subunit protein bL28c (rpl28).